Reading from the N-terminus, the 214-residue chain is Leucyl/phenylalanyl-tRNA--protein transferase (214 aa).

Belongs to the L/F-transferase family.

It localises to the cytoplasm. The catalysed reaction is N-terminal L-lysyl-[protein] + L-leucyl-tRNA(Leu) = N-terminal L-leucyl-L-lysyl-[protein] + tRNA(Leu) + H(+). It catalyses the reaction N-terminal L-arginyl-[protein] + L-leucyl-tRNA(Leu) = N-terminal L-leucyl-L-arginyl-[protein] + tRNA(Leu) + H(+). It carries out the reaction L-phenylalanyl-tRNA(Phe) + an N-terminal L-alpha-aminoacyl-[protein] = an N-terminal L-phenylalanyl-L-alpha-aminoacyl-[protein] + tRNA(Phe). Functionally, functions in the N-end rule pathway of protein degradation where it conjugates Leu, Phe and, less efficiently, Met from aminoacyl-tRNAs to the N-termini of proteins containing an N-terminal arginine or lysine. This Cereibacter sphaeroides (strain ATCC 17029 / ATH 2.4.9) (Rhodobacter sphaeroides) protein is Leucyl/phenylalanyl-tRNA--protein transferase.